The sequence spans 215 residues: uncharacterized protein (215 aa).

This is an uncharacterized protein from Ostreid herpesvirus 1 (isolate France) (OsHV-1).